A 293-amino-acid polypeptide reads, in one-letter code: Acetylglutamate kinase (293 aa).

Substrate-binding positions include 70-71, R92, and N186; that span reads GG.

Belongs to the acetylglutamate kinase family. ArgB subfamily.

It is found in the cytoplasm. The enzyme catalyses N-acetyl-L-glutamate + ATP = N-acetyl-L-glutamyl 5-phosphate + ADP. It participates in amino-acid biosynthesis; L-arginine biosynthesis; N(2)-acetyl-L-ornithine from L-glutamate: step 2/4. Catalyzes the ATP-dependent phosphorylation of N-acetyl-L-glutamate. This is Acetylglutamate kinase from Synechococcus sp. (strain CC9605).